The following is a 492-amino-acid chain: MSTGADLKAREGDIPSDNMTQEQSFKKGFCSLRHGLAFILHLCNFSIYTQQMNLSFAITAMVNTTVASSQLNASTERPPTNSQDVWNETLQESKAPVYDWTPEIQGILLSSLSYGSFIAPIPTGYVAGVFGAKYVVGLGLLISSVLTLFIPLAADAGVALLIVLRVIQGMAQVMVLTGQYSLWAKWAPPQERSQLITIAASGSMLGTFLVLIAGGLICQALGWPYIFYIFGGIGCACCLLWFPLVYDDPQNHPFISTGERRYITCSLAQEDCSLGWSLPIKAMVKSLPLWAIVVSYFCEYWLLSTVMAYTPTYISSVLQANLRDSGILSALPFMFGCVCIILGGLLADFLLSRKILRLVTIRKLFTAVGVLASSGILLPLPWVRSSRSTTMAFLVLSSVFASLCDSGALINFLDIAPRYAGFLKGLLQVFSYLAGGIAPTVAGFFISQDSEFGWRNVFFLAAAIDVVGLLFYLIFSRAEVQDWAKEPTFTHL.

The segment at 1-20 (MSTGADLKAREGDIPSDNMT) is disordered. Residues Asn-18, Asn-44, Asn-53, Asn-63, Asn-72, and Asn-87 are each glycosylated (N-linked (GlcNAc...) asparagine). 11 consecutive transmembrane segments (helical) span residues 112-132 (LSYG…VFGA), 134-154 (YVVG…PLAA), 156-176 (AGVA…VMVL), 198-218 (IAAS…GLIC), 225-245 (YIFY…FPLV), 287-307 (LPLW…STVM), 327-347 (ILSA…GLLA), 363-383 (KLFT…LPWV), 393-413 (FLVL…INFL), 426-446 (LLQV…GFFI), and 456-476 (NVFF…LIFS).

It belongs to the major facilitator superfamily. Sodium/anion cotransporter family. In terms of tissue distribution, expressed in the small intestine (at protein level).

The protein resides in the apical cell membrane. It carries out the reaction 3 Na(+)(out) + phosphate(out) = 3 Na(+)(in) + phosphate(in). The enzyme catalyses urate(out) + n chloride(in) = urate(in) + n chloride(out). The catalysed reaction is L-thyroxine(out) = L-thyroxine(in). It catalyses the reaction 3,3',5-triiodo-L-thyronine(out) = 3,3',5-triiodo-L-thyronine(in). Acts as a membrane potential-dependent organic anion transporter, the transport requires a low concentration of chloride ions. Mediates chloride-dependent transport of urate. Mediates sodium-independent high affinity transport of thyroid hormones including L-thyroxine (T4) and 3,3',5-triiodo-L-thyronine (T3). Can actively transport inorganic phosphate into cells via Na(+) cotransport. The polypeptide is Probable small intestine urate exporter (Slc17a4) (Mus musculus (Mouse)).